Here is a 509-residue protein sequence, read N- to C-terminus: Maturase K (509 aa).

It belongs to the intron maturase 2 family. MatK subfamily.

It localises to the plastid. Its subcellular location is the chloroplast. Its function is as follows. Usually encoded in the trnK tRNA gene intron. Probably assists in splicing its own and other chloroplast group II introns. The protein is Maturase K of Nicotiana alata (Winged tobacco).